The primary structure comprises 555 residues: Meiotic mRNA stability protein kinase SSN3 (555 aa).

Residues 75–463 form the Protein kinase domain; it reads YEVIGYIAAG…AFNALEHKYF (389 aa). Residue 81-89 participates in ATP binding; it reads IAAGTYGKV. The span at 100–138 shows a compositional bias: polar residues; sequence TNSANGSSLNGTNAKIPQFDSTQPKSSSSMDMQANTNAL. The tract at residues 100-166 is disordered; that stretch reads TNSANGSSLN…REDVSPHYNS (67 aa). Lys-183 contributes to the ATP binding site. The Proton acceptor role is filled by Asp-286.

It belongs to the protein kinase superfamily. CMGC Ser/Thr protein kinase family. CDC2/CDKX subfamily. In terms of assembly, component of the SRB8-11 complex which consists of SRB8, SSN2/SRB9, SSN3/SRB10 and SSN8/SRB11. The SRB8-11 complex associates with the Mediator complex. The SSN3/SRB10 and SSN8/SRB11 kinase-cyclin pair also associate with the RNA polymerase II holoenzyme. Interacts with TUP1.

The protein resides in the nucleus. The catalysed reaction is L-seryl-[protein] + ATP = O-phospho-L-seryl-[protein] + ADP + H(+). It catalyses the reaction L-threonyl-[protein] + ATP = O-phospho-L-threonyl-[protein] + ADP + H(+). The enzyme catalyses [DNA-directed RNA polymerase] + ATP = phospho-[DNA-directed RNA polymerase] + ADP + H(+). In terms of biological role, component of the SRB8-11 complex. The SRB8-11 complex is a regulatory module of the Mediator complex which is itself involved in regulation of basal and activated RNA polymerase II-dependent transcription. The SRB8-11 complex may be involved in the transcriptional repression of a subset of genes regulated by Mediator. It may inhibit the association of the Mediator complex with RNA polymerase II to form the holoenzyme complex. The SRB8-11 complex phosphorylates the C-terminal domain (CTD) of the largest subunit of RNA polymerase II RPB1 at serines 2 and 5. The SSN3/SRB10 and SSN8/SRB11 kinase-cyclin pair may also positively and negatively regulate numerous transcriptional activators in response to changes in nutritional and physiological conditions. Phosphorylates GCN4, promoting its ubiquitin-mediated degradation, and MSN2, promoting its nuclear exclusion. Phosphorylates STE12, thereby promoting its degradation and inhibition of filamentous growth. Phosphorylates GAL4, and this phosphorylation is required for efficient galactose-inducible transcription. Also phosphorylates BDF1 and the TAF2 subunit of the TFIID complex. This Saccharomyces cerevisiae (strain ATCC 204508 / S288c) (Baker's yeast) protein is Meiotic mRNA stability protein kinase SSN3 (SSN3).